We begin with the raw amino-acid sequence, 763 residues long: MKNFLPRTLKNIYELYFNNISVHSIVSRNTQLKRSKIIQMTTETFEDIKLEDIPVDDIDFSDLEEQYKVTEEFNFDQYIVVNGAPVIPSAKVPVLKKALTSLFSKAGKVVNMEFPIDEATGKTKGFLFVECGSMNDAKKIIKSFHGKRLDLKHRLFLYTMKDVERYNSDDFDTEFREPDMPTFVPSSSLKSWLMDDKVRDQFVLQDDVKTSVFWNSMFNEEDSLVESRENWSTNYVRFSPKGTYLFSYHQQGVTAWGGPNFDRLRRFYHPDVRNSSVSPNEKYLVTFSTEPIIVEEDNEFSPFTKKNEGHQLCIWDIASGLLMATFPVIKSPYLKWPLVRWSYNDKYCARMVGDSLIVHDATKNFMPLEAKALKPSGIRDFSFAPEGVKLQPFRNGDEPSVLLAYWTPETNNSACTATIAEVPRGRVLKTVNLVQVSNVTLHWQNQAEFLCFNVERHTKSGKTQFSNLQICRLTERDIPVEKVELKDSVFEFGWEPHGNRFVTISVHEVADMNYAIPANTIRFYAPETKEKTDVIKRWSLVKEIPKTFANTVSWSPAGRFVVVGALVGPNMRRSDLQFYDMDYPGEKNINDNNDVSASLKDVAHPTYSAATNITWDPSGRYVTAWSSSLKHKVEHGYKIFNIAGNLVKEDIIAGFKNFAWRPRPASILSNAERKKVRKNLREWSAQFEEQDAMEADTAMRDLILHQRELLKQWTEYREKIGQEMEKSMNFKIFDVQPEDASDDFTTIEEIVEEVLEETKEKVE.

The tract at residues 1-136 (MKNFLPRTLK…LFVECGSMND (136 aa)) is sufficient for interaction with HCR1 and TIF32. The segment at 28 to 261 (RNTQLKRSKI…GVTAWGGPNF (234 aa)) is sufficient for interaction with PIC8. Residue serine 61 is modified to Phosphoserine. Tyrosine 67 is modified (phosphotyrosine). The RRM domain occupies 77–162 (QYIVVNGAPV…HRLFLYTMKD (86 aa)). 6 WD repeats span residues 228 to 266 (RENWSTNYVRFSPKGTYLFSYHQQGVTAWGGPNFDRLRR), 277 to 325 (VSPN…LMAT), 373 to 416 (LKPS…SACT), 484 to 524 (ELKD…IRFY), 544 to 589 (IPKT…EKNI), and 605 to 650 (PTYS…VKED). Residue serine 669 is modified to Phosphoserine.

This sequence belongs to the eIF-3 subunit B family. The eukaryotic translation initiation factor 3 (eIF-3) core complex is composed of TIF32, PRT1, NIP1, TIF34 and TIF35. A subcomplex of TIF32, NIP1 and PRT1 mediates the interaction with eIF-1, TIF5/eIF-5 and HCR1. The factors eIF-1, eIF-2, eIF-3, TIF5/eIF-5 and methionyl-tRNAi form a multifactor complex (MFC) that may bind to the 40S ribosome.

It is found in the cytoplasm. Functionally, RNA-binding component of the eukaryotic translation initiation factor 3 (eIF-3) complex, which is involved in protein synthesis of a specialized repertoire of mRNAs and, together with other initiation factors, stimulates binding of mRNA and methionyl-tRNAi to the 40S ribosome. The eIF-3 complex specifically targets and initiates translation of a subset of mRNAs involved in cell proliferation. In Saccharomyces cerevisiae (strain ATCC 204508 / S288c) (Baker's yeast), this protein is Eukaryotic translation initiation factor 3 subunit B.